The sequence spans 369 residues: Protein disulfide-isomerase erp38 (369 aa).

The N-terminal stretch at 1–18 is a signal peptide; the sequence is MVLLKSLVVASLAAAVAA. Thioredoxin domains follow at residues 19–130 and 131–251; these read KSAV…EKTG and VKAR…EKAG. Residues Cys-50, Cys-53, Cys-170, and Cys-173 each act as nucleophile in the active site. 2 disulfides stabilise this stretch: Cys-50–Cys-53 and Cys-170–Cys-173. The Prevents secretion from ER signature appears at 366–369; sequence KEEL.

Belongs to the protein disulfide isomerase family.

The protein resides in the endoplasmic reticulum lumen. It catalyses the reaction Catalyzes the rearrangement of -S-S- bonds in proteins.. The polypeptide is Protein disulfide-isomerase erp38 (erp38) (Neurospora crassa (strain ATCC 24698 / 74-OR23-1A / CBS 708.71 / DSM 1257 / FGSC 987)).